The primary structure comprises 186 residues: Interferon beta (186 aa).

A signal peptide spans 1–21 (MTGRCILQIALLVCFFTTAHS). The residue at position 24 (Y24) is a Phosphotyrosine. N46, N101, N131, and N136 each carry an N-linked (GlcNAc...) asparagine glycan. C52 and C161 are joined by a disulfide.

This sequence belongs to the alpha/beta interferon family. As to quaternary structure, monomer.

The protein localises to the secreted. Functionally, type I interferon cytokine that plays a key role in the innate immune response to infection, developing tumors and other inflammatory stimuli. Signals via binding to high-affinity (IFNAR2) and low-affinity (IFNAR1) heterodimeric receptor, activating the canonical Jak-STAT signaling pathway resulting in transcriptional activation or repression of interferon-regulated genes that encode the effectors of the interferon response, such as antiviral proteins, regulators of cell proliferation and differentiation, and immunoregulatory proteins. Signals mostly via binding to a IFNAR1-IFNAR2 heterodimeric receptor, but can also function with IFNAR1 alone and independently of Jak-STAT pathways. Elicits a wide variety of responses, including antiviral and antibacterial activities, and can regulate the development of B-cells, myelopoiesis and lipopolysaccharide (LPS)-inducible production of tumor necrosis factor. Plays a role in neuronal homeostasis by regulating dopamine turnover and protecting dopaminergic neurons: acts by promoting neuronal autophagy and alpha-synuclein clearance, thereby preventing dopaminergic neuron loss. IFNB1 is more potent than interferon-alpha (IFN-alpha) in inducing the apoptotic and antiproliferative pathways required for control of tumor cell growth. This is Interferon beta (IFNB1) from Felis catus (Cat).